A 491-amino-acid chain; its full sequence is Bifunctional protein GlmU (491 aa).

Residues 1–238 (MTTQPAVPAA…EWEIRGVNDR (238 aa)) form a pyrophosphorylase region. UDP-N-acetyl-alpha-D-glucosamine-binding positions include 14 to 17 (LAAG), lysine 28, glutamine 81, 86 to 87 (GT), 110 to 112 (YGD), glycine 149, glutamate 163, asparagine 178, and asparagine 236. Aspartate 112 serves as a coordination point for Mg(2+). Residue asparagine 236 participates in Mg(2+) binding. Residues 239–259 (AQLADLAAEANRRTLRRWMLA) form a linker region. The segment at 260 to 491 (GVTIADPATT…TASTDREIQP (232 aa)) is N-acetyltransferase. UDP-N-acetyl-alpha-D-glucosamine contacts are provided by arginine 341 and lysine 359. Residue histidine 371 is the Proton acceptor of the active site. Residues tyrosine 374 and asparagine 385 each coordinate UDP-N-acetyl-alpha-D-glucosamine. Acetyl-CoA contacts are provided by residues alanine 388, 394–395 (NY), serine 413, and alanine 431. The interval 460–491 (AKRPGTPAAEAAQRANDESTGTTASTDREIQP) is disordered.

In the N-terminal section; belongs to the N-acetylglucosamine-1-phosphate uridyltransferase family. This sequence in the C-terminal section; belongs to the transferase hexapeptide repeat family. As to quaternary structure, homotrimer. Requires Mg(2+) as cofactor.

The protein resides in the cytoplasm. It catalyses the reaction alpha-D-glucosamine 1-phosphate + acetyl-CoA = N-acetyl-alpha-D-glucosamine 1-phosphate + CoA + H(+). It carries out the reaction N-acetyl-alpha-D-glucosamine 1-phosphate + UTP + H(+) = UDP-N-acetyl-alpha-D-glucosamine + diphosphate. It functions in the pathway nucleotide-sugar biosynthesis; UDP-N-acetyl-alpha-D-glucosamine biosynthesis; N-acetyl-alpha-D-glucosamine 1-phosphate from alpha-D-glucosamine 6-phosphate (route II): step 2/2. The protein operates within nucleotide-sugar biosynthesis; UDP-N-acetyl-alpha-D-glucosamine biosynthesis; UDP-N-acetyl-alpha-D-glucosamine from N-acetyl-alpha-D-glucosamine 1-phosphate: step 1/1. Its pathway is bacterial outer membrane biogenesis; LPS lipid A biosynthesis. Its function is as follows. Catalyzes the last two sequential reactions in the de novo biosynthetic pathway for UDP-N-acetylglucosamine (UDP-GlcNAc). The C-terminal domain catalyzes the transfer of acetyl group from acetyl coenzyme A to glucosamine-1-phosphate (GlcN-1-P) to produce N-acetylglucosamine-1-phosphate (GlcNAc-1-P), which is converted into UDP-GlcNAc by the transfer of uridine 5-monophosphate (from uridine 5-triphosphate), a reaction catalyzed by the N-terminal domain. This is Bifunctional protein GlmU from Kineococcus radiotolerans (strain ATCC BAA-149 / DSM 14245 / SRS30216).